The sequence spans 456 residues: Adenylosuccinate lyase (456 aa).

Residues 15 to 16 (RY), 90 to 92 (NHD), and 122 to 123 (TS) contribute to the N(6)-(1,2-dicarboxyethyl)-AMP site. Histidine 171 (proton donor/acceptor) is an active-site residue. Glutamine 247 is a N(6)-(1,2-dicarboxyethyl)-AMP binding site. The active-site Proton donor/acceptor is the serine 295. N(6)-(1,2-dicarboxyethyl)-AMP-binding positions include serine 296, 301–303 (KVN), asparagine 309, arginine 335, and 340–344 (STVLR).

Belongs to the lyase 1 family. Adenylosuccinate lyase subfamily. In terms of assembly, homotetramer. Residues from neighboring subunits contribute catalytic and substrate-binding residues to each active site.

It carries out the reaction N(6)-(1,2-dicarboxyethyl)-AMP = fumarate + AMP. The enzyme catalyses (2S)-2-[5-amino-1-(5-phospho-beta-D-ribosyl)imidazole-4-carboxamido]succinate = 5-amino-1-(5-phospho-beta-D-ribosyl)imidazole-4-carboxamide + fumarate. Its pathway is purine metabolism; AMP biosynthesis via de novo pathway; AMP from IMP: step 2/2. The protein operates within purine metabolism; IMP biosynthesis via de novo pathway; 5-amino-1-(5-phospho-D-ribosyl)imidazole-4-carboxamide from 5-amino-1-(5-phospho-D-ribosyl)imidazole-4-carboxylate: step 2/2. In terms of biological role, catalyzes two reactions in de novo purine nucleotide biosynthesis. Catalyzes the breakdown of 5-aminoimidazole- (N-succinylocarboxamide) ribotide (SAICAR or 2-[5-amino-1-(5-phospho-beta-D-ribosyl)imidazole-4-carboxamido]succinate) to 5-aminoimidazole-4-carboxamide ribotide (AICAR or 5-amino-1-(5-phospho-beta-D-ribosyl)imidazole-4-carboxamide) and fumarate, and of adenylosuccinate (ADS or N(6)-(1,2-dicarboxyethyl)-AMP) to adenosine monophosphate (AMP) and fumarate. This Haemophilus influenzae (strain ATCC 51907 / DSM 11121 / KW20 / Rd) protein is Adenylosuccinate lyase (purB).